The following is a 545-amino-acid chain: Acetyltransferase BOT5 (545 aa).

Residues 1-19 (MATIPLFFSLILFLRLYHA) form the signal peptide. N-linked (GlcNAc...) asparagine glycosylation is found at Asn-70 and Asn-198. The active-site Proton acceptor is His-208. Asn-346 and Asn-445 each carry an N-linked (GlcNAc...) asparagine glycan. The disordered stretch occupies residues 466-493 (GAGNQKSSSTRKAARHTEPTQAQTQPGR).

Belongs to the plant acyltransferase family.

Its pathway is secondary metabolite biosynthesis. Its function is as follows. Acetyltransferase; part of the gene cluster that mediates the biosynthesis of botrydial. Botrydial is necessary for colonization of plant tissue by the T4 strain. It is a strain-dependent virulence factor since highly aggressive strains like SAS56 or B05 still retain substantial virulence when botrydial synthesis is impaired, since they produce also botcinic acid. The first step of botrydial biosynthesis is performed by the sesquiterpene synthase BOT2 which catalyzes the cyclization of farnesyl diphosphate (FPP) to presilphiperfolan-8-beta-ol (PSP). The cytochrome P450 monooxygenase BOT4 then catalyzes the hydroxylation at C-4 to give a probotryane intermediate. Acetylation of the hydroxyl at C-4 is carried out by the acetyltransferase BOT5, followed by the combined action of the P450 monooxygenases BOT3 and BOT1, to yield finally the glycol, via the regio- and stereospecific hydroxylations at C-10 and C-15 of the probotryane intermediates, respectively. The cleavage of the C10-C15 bond of probotryane skeleton is an intriguing and chemically important reaction, which could be mediated by some of the monooxygenases or by a combination of them. It is possible that either BOT3 or BOT1 would oxidize either the 10- or the 15-hydroxy group to the hydroperoxide derivative, which would then undergo heterolytic fragmentation to give the dialdehyde botrydial. Finally, the dehydrogenase BOT7 might be involved in the conversion of botrydial to dihydrobotrydial. The protein is Acetyltransferase BOT5 of Botryotinia fuckeliana (Noble rot fungus).